Consider the following 330-residue polypeptide: Ig gamma-2A chain C region, A allele (330 aa).

Ig-like domains lie at 6–98 (PSVY…KKIE), 121–220 (PSVF…RTIS), and 229–325 (PQVY…KSFS). Cystine bridges form between Cys27/Cys82, Cys144/Cys204, and Cys250/Cys308. An N-linked (GlcNAc...) asparagine glycan is attached at Asn180.

The polypeptide is Ig gamma-2A chain C region, A allele (Ighg) (Mus musculus (Mouse)).